The primary structure comprises 129 residues: Ribosome-binding factor A (129 aa).

The protein belongs to the RbfA family. Monomer. Binds 30S ribosomal subunits, but not 50S ribosomal subunits or 70S ribosomes.

It localises to the cytoplasm. In terms of biological role, one of several proteins that assist in the late maturation steps of the functional core of the 30S ribosomal subunit. Associates with free 30S ribosomal subunits (but not with 30S subunits that are part of 70S ribosomes or polysomes). Required for efficient processing of 16S rRNA. May interact with the 5'-terminal helix region of 16S rRNA. This is Ribosome-binding factor A from Actinobacillus succinogenes (strain ATCC 55618 / DSM 22257 / CCUG 43843 / 130Z).